The primary structure comprises 295 residues: Bis(5'-nucleosyl)-tetraphosphatase, symmetrical (295 aa).

The segment at 271–295 (LSIEHPRHTHTPRRKAKKRHKRSPK) is disordered. Basic residues predominate over residues 277–295 (RHTHTPRRKAKKRHKRSPK).

It belongs to the Ap4A hydrolase family.

It carries out the reaction P(1),P(4)-bis(5'-adenosyl) tetraphosphate + H2O = 2 ADP + 2 H(+). Its function is as follows. Hydrolyzes diadenosine 5',5'''-P1,P4-tetraphosphate to yield ADP. In Xylella fastidiosa (strain M23), this protein is Bis(5'-nucleosyl)-tetraphosphatase, symmetrical.